The primary structure comprises 245 residues: Fibroblast growth factor 3 (245 aa).

The N-terminal stretch at 1 to 17 (MGLIWLLLLSLLEPSWP) is a signal peptide. N-linked (GlcNAc...) asparagine glycosylation is present at asparagine 65. 2 disordered regions span residues 137–181 (GSSG…FLPR) and 195–245 (QSSQ…LAVA). A compositionally biased stretch (basic residues) spans 161–173 (GRPRRGFKTRRTQ). The segment covering 226–238 (TLSTRATPSTQLH) has biased composition (polar residues).

The protein belongs to the heparin-binding growth factors family. In terms of assembly, interacts with FGFR1 and FGFR2. Affinity between fibroblast growth factors (FGFs) and their receptors is increased by heparan sulfate glycosaminoglycans that function as coreceptors. Glycosylated.

The protein localises to the nucleus. Its subcellular location is the endoplasmic reticulum. The protein resides in the golgi apparatus. Plays an important role in the regulation of embryonic development, cell proliferation, and cell differentiation. Required for normal ear development. The protein is Fibroblast growth factor 3 (Fgf3) of Mus musculus (Mouse).